The following is a 320-amino-acid chain: Beta-sarcoglycan (320 aa).

Residues 1 to 10 (MAAAAAAAAA) show a composition bias toward low complexity. The tract at residues 1–34 (MAAAAAAAAATEQQSSNGPVKKSMREKAVERRNV) is disordered. The Cytoplasmic segment spans residues 1–67 (MAAAAAAAAA…GLRGRKGNLA (67 aa)). Over residues 23–34 (SMREKAVERRNV) the composition is skewed to basic and acidic residues. A helical; Signal-anchor for type II membrane protein transmembrane segment spans residues 68-88 (ICVIVLLFILAVINLLITLVI). Residues 89 to 320 (WAVIRIGPNG…VADNPCGNTH (232 aa)) are Extracellular-facing. 3 N-linked (GlcNAc...) asparagine glycosylation sites follow: Asn-160, Asn-213, and Asn-260. 2 disulfides stabilise this stretch: Cys-290–Cys-316 and Cys-292–Cys-309.

It belongs to the sarcoglycan beta/delta/gamma/zeta family. In terms of assembly, cross-link to form 2 major subcomplexes: one consisting of SGCB, SGCD and SGCG and the other consisting of SGCB and SGCD. The association between SGCB and SGCG is particularly strong while SGCA is loosely associated with the other sarcoglycans. Post-translationally, disulfide bonds are present.

It is found in the cell membrane. It localises to the sarcolemma. The protein resides in the cytoplasm. Its subcellular location is the cytoskeleton. In terms of biological role, component of the sarcoglycan complex, a subcomplex of the dystrophin-glycoprotein complex which forms a link between the F-actin cytoskeleton and the extracellular matrix. This chain is Beta-sarcoglycan (SGCB), found in Mesocricetus auratus (Golden hamster).